The primary structure comprises 202 residues: Adapter protein MecA 2 (202 aa).

Belongs to the MecA family. As to quaternary structure, homodimer.

In terms of biological role, enables the recognition and targeting of unfolded and aggregated proteins to the ClpC protease or to other proteins involved in proteolysis. Acts negatively in the development of competence by binding ComK and recruiting it to the ClpCP protease. When overexpressed, inhibits sporulation. Also involved in Spx degradation by ClpC. This is Adapter protein MecA 2 (mecA2) from Bacillus anthracis.